The following is a 779-amino-acid chain: Translation initiation factor IF-2 (779 aa).

The interval 44-193 (RQLDNAVDGT…TPPKPKELPE (150 aa)) is disordered. Residues 53–65 (TNKKAEAPKKETT) show a composition bias toward basic and acidic residues. Polar residues predominate over residues 66–81 (SNENGNSKGPNKPNMT). 2 stretches are compositionally biased toward low complexity: residues 82–93 (NSNEKSNKPNKP) and 117–167 (ANTS…NNKG). Positions 280 to 449 (ERPPVVTIMG…LLVSEVEELK (170 aa)) constitute a tr-type G domain. A G1 region spans residues 289–296 (GHVDHGKT). Position 289–296 (289–296 (GHVDHGKT)) interacts with GTP. A G2 region spans residues 314–318 (GITQH). Residues 335–338 (DTPG) form a G3 region. Residues 335 to 339 (DTPGH) and 389 to 392 (NKID) contribute to the GTP site. Positions 389–392 (NKID) are G4. A G5 region spans residues 425–427 (SAK).

It belongs to the TRAFAC class translation factor GTPase superfamily. Classic translation factor GTPase family. IF-2 subfamily.

The protein localises to the cytoplasm. In terms of biological role, one of the essential components for the initiation of protein synthesis. Protects formylmethionyl-tRNA from spontaneous hydrolysis and promotes its binding to the 30S ribosomal subunits. Also involved in the hydrolysis of GTP during the formation of the 70S ribosomal complex. The chain is Translation initiation factor IF-2 from Listeria monocytogenes serovar 1/2a (strain ATCC BAA-679 / EGD-e).